The following is a 239-amino-acid chain: Small ribosomal subunit protein uS2 (239 aa).

This sequence belongs to the universal ribosomal protein uS2 family.

In Francisella tularensis subsp. novicida (strain U112), this protein is Small ribosomal subunit protein uS2.